Reading from the N-terminus, the 245-residue chain is Orotidine 5'-phosphate decarboxylase (245 aa).

Substrate-binding positions include Asp22, Lys44, 71-80 (DLKFHDIPNT), Thr131, Arg192, Gln201, Gly221, and Arg222. Lys73 functions as the Proton donor in the catalytic mechanism.

It belongs to the OMP decarboxylase family. Type 1 subfamily. As to quaternary structure, homodimer.

It catalyses the reaction orotidine 5'-phosphate + H(+) = UMP + CO2. The protein operates within pyrimidine metabolism; UMP biosynthesis via de novo pathway; UMP from orotate: step 2/2. Its function is as follows. Catalyzes the decarboxylation of orotidine 5'-monophosphate (OMP) to uridine 5'-monophosphate (UMP). This Escherichia coli (strain K12 / MC4100 / BW2952) protein is Orotidine 5'-phosphate decarboxylase.